Here is a 317-residue protein sequence, read N- to C-terminus: Ribosomal RNA small subunit methyltransferase H (317 aa).

S-adenosyl-L-methionine is bound by residues 30 to 32, Asp-50, Tyr-74, Asp-95, and Gln-102; that span reads GGH.

It belongs to the methyltransferase superfamily. RsmH family.

Its subcellular location is the cytoplasm. It catalyses the reaction cytidine(1402) in 16S rRNA + S-adenosyl-L-methionine = N(4)-methylcytidine(1402) in 16S rRNA + S-adenosyl-L-homocysteine + H(+). Functionally, specifically methylates the N4 position of cytidine in position 1402 (C1402) of 16S rRNA. The chain is Ribosomal RNA small subunit methyltransferase H from Nitrosomonas europaea (strain ATCC 19718 / CIP 103999 / KCTC 2705 / NBRC 14298).